We begin with the raw amino-acid sequence, 219 residues long: Ribose-5-phosphate isomerase A (219 aa).

Substrate-binding positions include 28-31, 81-84, and 94-97; these read SGST, DGAD, and KGGG. Residue Glu103 is the Proton acceptor of the active site. Lys121 contacts substrate.

It belongs to the ribose 5-phosphate isomerase family. In terms of assembly, homodimer.

The enzyme catalyses aldehydo-D-ribose 5-phosphate = D-ribulose 5-phosphate. It participates in carbohydrate degradation; pentose phosphate pathway; D-ribose 5-phosphate from D-ribulose 5-phosphate (non-oxidative stage): step 1/1. Its function is as follows. Catalyzes the reversible conversion of ribose-5-phosphate to ribulose 5-phosphate. The chain is Ribose-5-phosphate isomerase A from Haemophilus influenzae (strain ATCC 51907 / DSM 11121 / KW20 / Rd).